Reading from the N-terminus, the 466-residue chain is Transcription factor eupR (466 aa).

The segment covering 1-18 (MFSTEPRSDTAPGSPSCS) has biased composition (polar residues). The tract at residues 1–22 (MFSTEPRSDTAPGSPSCSETKR) is disordered. The segment at residues 32–62 (CWECKRRKVKCSYSNPSDPRCIGCRRRGTKC) is a DNA-binding region (zn(2)-C6 fungal-type).

The protein resides in the nucleus. In terms of biological role, transcription factor; part of the gene cluster that mediates the biosynthesis of eupenifeldin, a bistropolone meroterpenoid that acts as an antitumor agent. This is Transcription factor eupR from Phoma sp.